The primary structure comprises 308 residues: 3'(2'),5'-bisphosphate nucleotidase 1 (308 aa).

Ala-2 carries the post-translational modification N-acetylalanine. The active-site Proton acceptor is the Asp-51. Mg(2+) contacts are provided by Glu-74, Asp-117, Leu-119, and Asp-120. The active-site Proton acceptor is Thr-122. The residue at position 122 (Thr-122) is a Phosphothreonine. The AMP site is built by Thr-195, His-198, Gly-220, and Lys-224. Position 240 is a phosphoserine (Ser-240). Lys-244 is modified (N6-succinyllysine). A Mg(2+)-binding site is contributed by Asp-247.

Belongs to the inositol monophosphatase superfamily. Mg(2+) is required as a cofactor. In terms of tissue distribution, highly expressed in kidney, liver, pancreas and heart. Detected at lower levels in brain, placenta, lung and skeletal muscle.

The enzyme catalyses adenosine 3',5'-bisphosphate + H2O = AMP + phosphate. The catalysed reaction is adenosine 2',5'-bisphosphate + H2O = AMP + phosphate. It catalyses the reaction 3'-phosphoadenylyl sulfate + H2O = adenosine 5'-phosphosulfate + phosphate. It carries out the reaction 1D-myo-inositol 1,4-bisphosphate + H2O = 1D-myo-inositol 4-phosphate + phosphate. The enzyme catalyses 1D-myo-inositol 1,3,4-trisphosphate + H2O = 1D-myo-inositol 3,4-bisphosphate + phosphate. Its activity is regulated as follows. Is very sensitive to inhibition by Li(+) (IC(50)=0.3 mM for hydrolysis of PAP; IC(50)=0.6 mM for hydrolysis of inositol-1,4-bis-phosphate). Is not affected by high Na(+) concentrations. Phosphatase that converts 3'(2')-phosphoadenosine 5'-phosphate (PAP) to AMP and inositol 1,4-bisphosphate (Ins(1,4)P2) to inositol 4-phosphate. Is also able to hydrolyze adenosine 3'-phosphate 5'-phosphosulfate (PAPS) to adenosine 5'-phosphosulfate (APS). Probably prevents the toxic accumulation of PAP, a compound which inhibits a variety of proteins, including PAPS-utilizing enzymes such as sulfotransferases, and RNA processing enzymes. Could also play a role in inositol recycling and phosphoinositide metabolism. Is not active on 3'-AMP, inositol-1-phosphate and inositol-1,4,5-triphosphate. The sequence is that of 3'(2'),5'-bisphosphate nucleotidase 1 (BPNT1) from Homo sapiens (Human).